The chain runs to 303 residues: Putative F-box protein At5g62060 (303 aa).

The region spanning 27-74 (KSRYIDIPLDITVEILKKLPAKSLVRFQCVSKQWSTIIGSRRDFIDSI) is the F-box domain.

The chain is Putative F-box protein At5g62060 from Arabidopsis thaliana (Mouse-ear cress).